The sequence spans 382 residues: MAAQRPLTIALVAGETSGDILGAGLIRALKARVPNARFVGVAGPRMQAEGCEAWYEMEELAVMGIVEVLGRLRRLLHIRADLTRRFTALKPDVFVGIDAPDFNITLEGNLKKQGIKTIHYVSPSVWAWRQKRVFKIGRSTHMVLAFLPFEKAFYDKFNVPCRFIGHTMADAMPLDPNKNTARDVLGIPHDAHCLALLPGSRGAEVEMLSADFLKTAQLLRQHYPDLEVVVPLVNAKRREQFEKIKAEIAPDLAVHLLDGMGREAMVASDAALLASGTAALECMLAKCPMVVGYRMKPFTFWLAKRLVKTEYVSLPNLLAGRELVKELLQEECEPQKLAEALLPLLANGKTSHVMHDTFRELHQQIRCNADEQAADAVLELAQ.

It belongs to the LpxB family.

The enzyme catalyses 2-N,3-O-bis[(3R)-3-hydroxytetradecanoyl]-alpha-D-glucosaminyl 1-phosphate + UDP-2-N,3-O-bis[(3R)-3-hydroxytetradecanoyl]-alpha-D-glucosamine = lipid A disaccharide (E. coli) + UDP + H(+). It carries out the reaction a lipid X + a UDP-2-N,3-O-bis[(3R)-3-hydroxyacyl]-alpha-D-glucosamine = a lipid A disaccharide + UDP + H(+). Its pathway is glycolipid biosynthesis; lipid IV(A) biosynthesis; lipid IV(A) from (3R)-3-hydroxytetradecanoyl-[acyl-carrier-protein] and UDP-N-acetyl-alpha-D-glucosamine: step 5/6. Functionally, condensation of UDP-2,3-diacylglucosamine and 2,3-diacylglucosamine-1-phosphate to form lipid A disaccharide, a precursor of lipid A, a phosphorylated glycolipid that anchors the lipopolysaccharide to the outer membrane of the cell. The protein is Lipid-A-disaccharide synthase of Salmonella arizonae (strain ATCC BAA-731 / CDC346-86 / RSK2980).